Reading from the N-terminus, the 267-residue chain is Aspartate/glutamate leucyltransferase (267 aa).

Residues 246 to 267 (EQEEQTRPLFRPSATGFSTGQE) are disordered.

Belongs to the R-transferase family. Bpt subfamily.

Its subcellular location is the cytoplasm. The enzyme catalyses N-terminal L-glutamyl-[protein] + L-leucyl-tRNA(Leu) = N-terminal L-leucyl-L-glutamyl-[protein] + tRNA(Leu) + H(+). The catalysed reaction is N-terminal L-aspartyl-[protein] + L-leucyl-tRNA(Leu) = N-terminal L-leucyl-L-aspartyl-[protein] + tRNA(Leu) + H(+). In terms of biological role, functions in the N-end rule pathway of protein degradation where it conjugates Leu from its aminoacyl-tRNA to the N-termini of proteins containing an N-terminal aspartate or glutamate. This Granulibacter bethesdensis (strain ATCC BAA-1260 / CGDNIH1) protein is Aspartate/glutamate leucyltransferase.